The following is a 350-amino-acid chain: UDP-N-acetylenolpyruvoylglucosamine reductase (350 aa).

Residues 25–194 enclose the FAD-binding PCMH-type domain; sequence VGPVARRLIT…LDVGGRSAPL (170 aa). R166 is an active-site residue. S243 functions as the Proton donor in the catalytic mechanism. E342 is a catalytic residue.

The protein belongs to the MurB family. FAD is required as a cofactor.

It localises to the cytoplasm. The enzyme catalyses UDP-N-acetyl-alpha-D-muramate + NADP(+) = UDP-N-acetyl-3-O-(1-carboxyvinyl)-alpha-D-glucosamine + NADPH + H(+). It functions in the pathway cell wall biogenesis; peptidoglycan biosynthesis. Its function is as follows. Cell wall formation. This chain is UDP-N-acetylenolpyruvoylglucosamine reductase, found in Mycobacterium sp. (strain MCS).